A 118-amino-acid polypeptide reads, in one-letter code: Large ribosomal subunit protein bL19 (118 aa).

It belongs to the bacterial ribosomal protein bL19 family.

In terms of biological role, this protein is located at the 30S-50S ribosomal subunit interface and may play a role in the structure and function of the aminoacyl-tRNA binding site. The sequence is that of Large ribosomal subunit protein bL19 from Campylobacter jejuni subsp. jejuni serotype O:2 (strain ATCC 700819 / NCTC 11168).